We begin with the raw amino-acid sequence, 216 residues long: Adenylate kinase (216 aa).

10–15 (GAGKGT) is a binding site for ATP. Residues 30–59 (STGDMFRAAMKNETALGLEAKSYIDKGELV) are NMP. AMP contacts are provided by residues T31, R36, 57 to 59 (ELV), 85 to 88 (GFPR), and Q92. The LID stretch occupies residues 126 to 164 (GRFICRTCGATYHKLFNPPKVEGTCDRCGGHEFYQREDD). Residue R127 coordinates ATP. Zn(2+)-binding residues include C130 and C133. Position 136–137 (136–137 (TY)) interacts with ATP. Positions 150 and 153 each coordinate Zn(2+). Positions 161 and 172 each coordinate AMP. Residue R200 participates in ATP binding.

The protein belongs to the adenylate kinase family. In terms of assembly, monomer.

It is found in the cytoplasm. The catalysed reaction is AMP + ATP = 2 ADP. It functions in the pathway purine metabolism; AMP biosynthesis via salvage pathway; AMP from ADP: step 1/1. Catalyzes the reversible transfer of the terminal phosphate group between ATP and AMP. Plays an important role in cellular energy homeostasis and in adenine nucleotide metabolism. This is Adenylate kinase from Enterococcus faecalis (strain ATCC 700802 / V583).